The following is a 78-amino-acid chain: NAD(P)H-quinone oxidoreductase subunit O (78 aa).

This sequence belongs to the complex I NdhO subunit family. In terms of assembly, NDH-1 can be composed of about 15 different subunits; different subcomplexes with different compositions have been identified which probably have different functions.

The protein localises to the cell inner membrane. It carries out the reaction a plastoquinone + NADH + (n+1) H(+)(in) = a plastoquinol + NAD(+) + n H(+)(out). It catalyses the reaction a plastoquinone + NADPH + (n+1) H(+)(in) = a plastoquinol + NADP(+) + n H(+)(out). NDH-1 shuttles electrons from an unknown electron donor, via FMN and iron-sulfur (Fe-S) centers, to quinones in the respiratory and/or the photosynthetic chain. The immediate electron acceptor for the enzyme in this species is believed to be plastoquinone. Couples the redox reaction to proton translocation, and thus conserves the redox energy in a proton gradient. Cyanobacterial NDH-1 also plays a role in inorganic carbon-concentration. The protein is NAD(P)H-quinone oxidoreductase subunit O of Gloeobacter violaceus (strain ATCC 29082 / PCC 7421).